We begin with the raw amino-acid sequence, 538 residues long: Syncytin-1 (538 aa).

The first 20 residues, 1-20, serve as a signal peptide directing secretion; the sequence is MALPYHIFLFTVLLPSFTLT. The Extracellular portion of the chain corresponds to 21–443; sequence APPPCRCMTS…NTGPWGLLSQ (423 aa). N-linked (GlcNAc...) asparagine glycosylation occurs at N169. A CXXC motif is present at residues 186–189; the sequence is CWIC. Disulfide bonds link C186-C189, C186-C405, and C397-C404. N-linked (GlcNAc...) asparagine glycans are attached at residues N208, N214, N234, N242, and N281. The tract at residues 320-340 is fusion peptide; sequence ILPFVIGAGVLGALGTGIGGI. The interval 380–396 is immunosuppression; it reads LQNRRALDLLTAERGGT. The short motif at 397–405 is the CX6CC element; the sequence is CLFLGEECC. An N-linked (GlcNAc...) asparagine glycan is attached at N409. Residues 444-464 traverse the membrane as a helical segment; sequence WMPWILPFLGPLAAIILLLLF. An essential for the fusiogenic function region spans residues 465–484; sequence GPCIFNLLVNFVSSRIEAVK. At 465 to 538 the chain is on the cytoplasmic side; the sequence is GPCIFNLLVN…LLRPNSAGSS (74 aa). Residues 496–538 are disordered; sequence KIYRRPLDRPASPRSDVNDIKGTPPEEILTAQPLLRPNSAGSS.

Belongs to the gamma type-C retroviral envelope protein family. HERV class-I W env subfamily. In terms of assembly, the mature envelope protein (Env) consists of a trimer of SU-TM heterodimers attached probably by a labile interchain disulfide bond. Interacts with the C-type lectin CD209/DC-SIGN. In terms of processing, specific enzymatic cleavages in vivo yield mature proteins. Envelope glycoproteins are synthesized as an inactive precursor that is heavily N-glycosylated and processed likely by furin in the Golgi to yield the mature SU and TM proteins. The cleavage site between SU and TM requires the minimal sequence [KR]-X-[KR]-R. Post-translationally, the CXXC motif is highly conserved across a broad range of retroviral envelope proteins. It is thought to participate in the formation of a labile disulfide bond possibly with the CX6CC motif present in the transmembrane protein.

The protein resides in the cell membrane. The protein localises to the virion. Its function is as follows. This endogenous retroviral envelope protein has retained its original fusogenic properties and participates in trophoblast fusion and the formation of a syncytium during placenta morphogenesis. May recognize and induce fusion through binding of SLC1A4 and SLC1A5. Endogenous envelope proteins may have kept, lost or modified their original function during evolution. Retroviral envelope proteins mediate receptor recognition and membrane fusion during early infection. The surface protein (SU) mediates receptor recognition, while the transmembrane protein (TM) acts as a class I viral fusion protein. The protein may have at least 3 conformational states: pre-fusion native state, pre-hairpin intermediate state, and post-fusion hairpin state. During viral and target cell membrane fusion, the coiled coil regions (heptad repeats) assume a trimer-of-hairpins structure, positioning the fusion peptide in close proximity to the C-terminal region of the ectodomain. The formation of this structure appears to drive apposition and subsequent fusion of membranes. The chain is Syncytin-1 (ERVW-1) from Pan troglodytes (Chimpanzee).